Consider the following 211-residue polypeptide: MTSPSDFPTPPVPGRLLDVEDVTVFRGDRLVLDGVSLTLDAGDAMILTGPNGAGKSTLLRTISGLRRPDSGEVIRYGDLAWLGHQDALKPGLTLAQNLALAEKLGTNSLSDALEALDLTHLTDLPARLLSSGQKRRAAFARVMLSGALLWLLDEPTVGLDVASIERLGAVMAAHRAKGGAMIVTTHVPLPLDNTRSHELPSLAHVESFWLS.

The ABC transporter domain occupies 17-209; the sequence is LDVEDVTVFR…PSLAHVESFW (193 aa). 49–56 contacts ATP; sequence GPNGAGKS.

Belongs to the ABC transporter superfamily. CcmA exporter (TC 3.A.1.107) family. The complex is composed of two ATP-binding proteins (CcmA) and two transmembrane proteins (CcmB).

Its subcellular location is the cell inner membrane. The enzyme catalyses heme b(in) + ATP + H2O = heme b(out) + ADP + phosphate + H(+). Part of the ABC transporter complex CcmAB involved in the biogenesis of c-type cytochromes; once thought to export heme, this seems not to be the case, but its exact role is uncertain. Responsible for energy coupling to the transport system. This Gluconobacter oxydans (strain 621H) (Gluconobacter suboxydans) protein is Cytochrome c biogenesis ATP-binding export protein CcmA.